The following is a 212-amino-acid chain: Peptide methionine sulfoxide reductase MsrA (212 aa).

C51 is a catalytic residue.

The protein belongs to the MsrA Met sulfoxide reductase family.

The catalysed reaction is L-methionyl-[protein] + [thioredoxin]-disulfide + H2O = L-methionyl-(S)-S-oxide-[protein] + [thioredoxin]-dithiol. The enzyme catalyses [thioredoxin]-disulfide + L-methionine + H2O = L-methionine (S)-S-oxide + [thioredoxin]-dithiol. Has an important function as a repair enzyme for proteins that have been inactivated by oxidation. Catalyzes the reversible oxidation-reduction of methionine sulfoxide in proteins to methionine. The polypeptide is Peptide methionine sulfoxide reductase MsrA (Vibrio parahaemolyticus serotype O3:K6 (strain RIMD 2210633)).